Here is a 332-residue protein sequence, read N- to C-terminus: MYIVVTGAAGFIGSNIVKALNERGITNIIAVDNLTKADKFKNLIDCDIVDYLDKNDFIERIQAGHFDGEIDAILHEGACSDTMETDGRYMMENNYRYSMILLDWCLDQDVQFLYASSAATYGSSGTFKEERQYEGPLNVYGYSKFLFDQIVRQRLAQNPSSQIVGFRYFNVYGPRETHKGRMASVAFHNFNQFRADGKVKLFEGSHGYPDGDQQRDFVFVGDVAKVNLFFLDHPEKSGIFNLGSGRAQSFNDVAVAAVNGCRKARSESALSLEELRAQGLLEYVAFPEALKGKYQAFTQADLGKLRAAGYDAPMATVEEGVSQYIEWLQRNV.

Residues 11–12 (FI), 32–33 (DN), lysine 39, lysine 54, 76–80 (EGACS), and asparagine 93 each bind NADP(+). Tyrosine 140 serves as the catalytic Proton acceptor. Residue lysine 144 participates in NADP(+) binding. Asparagine 170 contributes to the substrate binding site. NADP(+) is bound by residues valine 171 and lysine 179. Lysine 179 functions as the Proton acceptor in the catalytic mechanism. Substrate-binding positions include arginine 181, histidine 188, 202–205 (FEGS), arginine 215, and tyrosine 294.

Belongs to the NAD(P)-dependent epimerase/dehydratase family. HldD subfamily. Homopentamer. NADP(+) is required as a cofactor.

It carries out the reaction ADP-D-glycero-beta-D-manno-heptose = ADP-L-glycero-beta-D-manno-heptose. It participates in nucleotide-sugar biosynthesis; ADP-L-glycero-beta-D-manno-heptose biosynthesis; ADP-L-glycero-beta-D-manno-heptose from D-glycero-beta-D-manno-heptose 7-phosphate: step 4/4. In terms of biological role, catalyzes the interconversion between ADP-D-glycero-beta-D-manno-heptose and ADP-L-glycero-beta-D-manno-heptose via an epimerization at carbon 6 of the heptose. This chain is ADP-L-glycero-D-manno-heptose-6-epimerase, found in Dechloromonas aromatica (strain RCB).